Consider the following 294-residue polypeptide: Nucleotide-binding protein Dtur_1129 (294 aa).

An ATP-binding site is contributed by Gly-10–Ser-17. Asp-61–Thr-64 is a binding site for GTP.

The protein belongs to the RapZ-like family.

Displays ATPase and GTPase activities. The polypeptide is Nucleotide-binding protein Dtur_1129 (Dictyoglomus turgidum (strain DSM 6724 / Z-1310)).